The following is a 690-amino-acid chain: Glycine--tRNA ligase beta subunit (690 aa).

This sequence belongs to the class-II aminoacyl-tRNA synthetase family. In terms of assembly, tetramer of two alpha and two beta subunits.

The protein resides in the cytoplasm. The catalysed reaction is tRNA(Gly) + glycine + ATP = glycyl-tRNA(Gly) + AMP + diphosphate. The protein is Glycine--tRNA ligase beta subunit of Proteus mirabilis (strain HI4320).